A 132-amino-acid polypeptide reads, in one-letter code: Ribosome-binding factor A (132 aa).

This sequence belongs to the RbfA family. In terms of assembly, monomer. Binds 30S ribosomal subunits, but not 50S ribosomal subunits or 70S ribosomes.

The protein localises to the cytoplasm. In terms of biological role, one of several proteins that assist in the late maturation steps of the functional core of the 30S ribosomal subunit. Associates with free 30S ribosomal subunits (but not with 30S subunits that are part of 70S ribosomes or polysomes). Required for efficient processing of 16S rRNA. May interact with the 5'-terminal helix region of 16S rRNA. This is Ribosome-binding factor A from Caldicellulosiruptor bescii (strain ATCC BAA-1888 / DSM 6725 / KCTC 15123 / Z-1320) (Anaerocellum thermophilum).